A 159-amino-acid chain; its full sequence is MTNGNGTPPETAPSPQLNVLAQYTKDFSFENPNSPASLAPQQQPPSINVQINVGASNVAENDYEVVLKVEGKAEHAGKLMFSFELAYAGVFRIVNVPQENLHPLVMIECPRLLFPFAREIVATAVRDGGFPPLMLDPIDFVSLYRQNMERQAAAQQQPS.

Belongs to the SecB family. Homotetramer, a dimer of dimers. One homotetramer interacts with 1 SecA dimer.

The protein resides in the cytoplasm. In terms of biological role, one of the proteins required for the normal export of preproteins out of the cell cytoplasm. It is a molecular chaperone that binds to a subset of precursor proteins, maintaining them in a translocation-competent state. It also specifically binds to its receptor SecA. The sequence is that of Protein-export protein SecB from Nitrobacter winogradskyi (strain ATCC 25391 / DSM 10237 / CIP 104748 / NCIMB 11846 / Nb-255).